Here is a 706-residue protein sequence, read N- to C-terminus: DNA ligase (706 aa).

NAD(+) is bound by residues 47 to 51 (DSEYD), 96 to 97 (SI), and E133. K135 functions as the N6-AMP-lysine intermediate in the catalytic mechanism. NAD(+)-binding residues include R156, E192, K323, and K347. 4 residues coordinate Zn(2+): C441, C444, C459, and C465. Residues 624-706 (VAPKPLSGKT…MRLLASAEAE (83 aa)) enclose the BRCT domain.

This sequence belongs to the NAD-dependent DNA ligase family. LigA subfamily. Mg(2+) is required as a cofactor. Mn(2+) serves as cofactor.

It carries out the reaction NAD(+) + (deoxyribonucleotide)n-3'-hydroxyl + 5'-phospho-(deoxyribonucleotide)m = (deoxyribonucleotide)n+m + AMP + beta-nicotinamide D-nucleotide.. DNA ligase that catalyzes the formation of phosphodiester linkages between 5'-phosphoryl and 3'-hydroxyl groups in double-stranded DNA using NAD as a coenzyme and as the energy source for the reaction. It is essential for DNA replication and repair of damaged DNA. The protein is DNA ligase of Polaromonas sp. (strain JS666 / ATCC BAA-500).